The following is a 597-amino-acid chain: MPEEVHHGEEEVETFAFQAEIAQLISLIINTFYSNEEIFLQELISNASDALDKIRYESLTDPSKLDSGKELKIDIIPNPQERTLALVDTGIGMTKADLINNLRTIAKSGTKACMEALQAEKLVVITKHNDDEQYAWESSAGGSFTVHADHGEPIGRGTKVILHLKEDQTEYLEERRVKEVVKKHSQFIGYPITLYLEKEQDKEISDDEAEEEKGEKEEEDKDDEEKPKIKDVGSDEEDDSKEYGEFYKSLTSDWEDHLAVKHFSVEGQLEFRALLFSPRRAPFDLFENKKKKNNIKLYVRRVFIMDSCDELIPEYLNFIHGVVDSEDLPLNISREMLQQSKILKYVSHMKETQKSTYYITGESKEQVANSAFVERVRKQGFEVVYMTEPIDEYCVQQLKEFDGKSLVSVTKEGLELPEDEEEKKKMEESKEKFENLCKLMKEILDKKVEKVTISNRLVSSPCCIVTSTYGWTANMEQIMKAQALRDNSTMGYMMAKKHLEINPDHPIMETLRQKAEADKNDKAVKDLVVLLFETALLSSGFSLEDPQTHSNHIYHMIKLGLGTDEDEVAAEEPSDAVPDEIPPLEGDEDASRMEEVD.

Residues N46, D88, and K107 each contribute to the ATP site. Positions 201–241 are disordered; the sequence is DKEISDDEAEEEKGEKEEEDKDDEEKPKIKDVGSDEEDDSK. Positions 204–223 are enriched in acidic residues; it reads ISDDEAEEEKGEKEEEDKDD. The segment covering 224–233 has biased composition (basic and acidic residues); it reads EEKPKIKDVG. R334 provides a ligand contact to ATP. A coiled-coil region spans residues 414–446; that stretch reads LELPEDEEEKKKMEESKEKFENLCKLMKEILDK. A compositionally biased stretch (acidic residues) spans 564–578; the sequence is DEDEVAAEEPSDAVP. The disordered stretch occupies residues 564–597; it reads DEDEVAAEEPSDAVPDEIPPLEGDEDASRMEEVD. Residues 593–597 carry the TPR repeat-binding motif; that stretch reads MEEVD.

The protein belongs to the heat shock protein 90 family. As to quaternary structure, homodimer.

It is found in the cytoplasm. In terms of biological role, putative molecular chaperone that may promote the maturation, structural maintenance and proper regulation of specific target proteins. This is Putative heat shock protein HSP 90-beta-3 (HSP90AB3P) from Homo sapiens (Human).